The sequence spans 164 residues: ATP synthase subunit b (164 aa).

A helical membrane pass occupies residues 6 to 26 (GELVGNFILVTGSVIVLLLLI).

It belongs to the ATPase B chain family. As to quaternary structure, F-type ATPases have 2 components, F(1) - the catalytic core - and F(0) - the membrane proton channel. F(1) has five subunits: alpha(3), beta(3), gamma(1), delta(1), epsilon(1). F(0) has three main subunits: a(1), b(2) and c(10-14). The alpha and beta chains form an alternating ring which encloses part of the gamma chain. F(1) is attached to F(0) by a central stalk formed by the gamma and epsilon chains, while a peripheral stalk is formed by the delta and b chains.

The protein localises to the cell membrane. In terms of biological role, f(1)F(0) ATP synthase produces ATP from ADP in the presence of a proton or sodium gradient. F-type ATPases consist of two structural domains, F(1) containing the extramembraneous catalytic core and F(0) containing the membrane proton channel, linked together by a central stalk and a peripheral stalk. During catalysis, ATP synthesis in the catalytic domain of F(1) is coupled via a rotary mechanism of the central stalk subunits to proton translocation. Its function is as follows. Component of the F(0) channel, it forms part of the peripheral stalk, linking F(1) to F(0). This chain is ATP synthase subunit b, found in Streptococcus pyogenes serotype M3 (strain ATCC BAA-595 / MGAS315).